The primary structure comprises 316 residues: Replication initiation protein (316 aa).

The protein belongs to the initiator RepB protein family.

The chain is Replication initiation protein (repA) from Escherichia coli.